Here is a 108-residue protein sequence, read N- to C-terminus: DNA-binding protein HBbu (108 aa).

It belongs to the bacterial histone-like protein family.

In terms of biological role, histone-like DNA-binding protein which is capable of wrapping DNA to stabilize it, and thus to prevent its denaturation under extreme environmental conditions. The chain is DNA-binding protein HBbu (hbb) from Borreliella afzelii (Borrelia afzelii).